Reading from the N-terminus, the 567-residue chain is Laccase-7 (567 aa).

The first 23 residues, 1 to 23 (MEGVRVPIACALILLAISSITSA), serve as a signal peptide directing secretion. 2 Plastocyanin-like domains span residues 31 to 147 (NVQN…PKSG) and 157 to 310 (KEVP…YGGA). N-linked (GlcNAc...) asparagine glycosylation is found at Asn34, Asn50, and Asn77. The Cu cation site is built by His81 and His83. Residue Asn115 is glycosylated (N-linked (GlcNAc...) asparagine). 2 residues coordinate Cu cation: His126 and His128. N-linked (GlcNAc...) asparagine glycans are attached at residues Asn186, Asn298, Asn339, Asn374, Asn386, Asn427, and Asn450. Positions 412-551 (DFPDQPPVKF…GMIFVVKNGP (140 aa)) constitute a Plastocyanin-like 3 domain. The Cu cation site is built by His468, His471, His473, His530, Cys531, His532, and His536.

This sequence belongs to the multicopper oxidase family. The cofactor is Cu cation. Predominantly expressed in tissues other than the inflorescence stem.

The protein resides in the secreted. It localises to the extracellular space. Its subcellular location is the apoplast. It carries out the reaction 4 hydroquinone + O2 = 4 benzosemiquinone + 2 H2O. Functionally, lignin degradation and detoxification of lignin-derived products. This chain is Laccase-7 (LAC7), found in Arabidopsis thaliana (Mouse-ear cress).